The chain runs to 417 residues: Alpha-ionylideneethane synthase aba3 (417 aa).

It belongs to the alpha-ionylideneethane synthase family.

It participates in hormone biosynthesis. Its function is as follows. Alpha-ionylideneethane synthase; part of the gene cluster that mediates the biosynthesis of abscisic acid (ABA), a phytohormone that acts antagonistically toward salicylic acid (SA), jasmonic acid (JA) and ethylene (ETH) signaling, to impede plant defense responses. The first step of the pathway catalyzes the reaction from farnesyl diphosphate to alpha-ionylideneethane performed by the alpha-ionylideneethane synthase aba3 via a three-step reaction mechanism involving 2 neutral intermediates, beta-farnesene and allofarnesene. The cytochrome P450 monooxygenase aba1 might then be involved in the conversion of alpha-ionylideneethane to alpha-ionylideneacetic acid. Alpha-ionylideneacetic acid is further converted to abscisic acid in 2 steps involving the cytochrome P450 monooxygenase aba2 and the short-chain dehydrogenase/reductase aba4, via the intermediates 1'-deoxy-ABA or 1',4'-trans-diol-ABA, depending on the order of action of these 2 enzymes. Aba2 is responsible for the hydroxylation of carbon atom C-1' and aba4 might be involved in the oxidation of the C-4' carbon atom. This is Alpha-ionylideneethane synthase aba3 from Botryotinia fuckeliana (Noble rot fungus).